The primary structure comprises 494 residues: Vacuolar-processing enzyme (494 aa).

Positions 1-20 (MTRLASGVLITLLVALAGIA) are cleaved as a signal peptide. N-linked (GlcNAc...) asparagine glycosylation is present at Asn-151. His-178 is a catalytic residue. The Nucleophile role is filled by Cys-220. The cysteines at positions 253 and 267 are disulfide-linked. Asn-336 carries N-linked (GlcNAc...) asparagine glycosylation. Disulfide bonds link Cys-430–Cys-460 and Cys-442–Cys-477.

Belongs to the peptidase C13 family. As to expression, high levels are seen in the flowers, a lower level expression is seen in the leaves, while very low levels are seen in the stems and roots.

In terms of biological role, asparagine-specific endopeptidase that may be involved in processing of proteins targeted to vacuoles that accumulate during ethylene-regulated processes such as flower opening and flavedo degreening. The chain is Vacuolar-processing enzyme from Citrus sinensis (Sweet orange).